Here is a 238-residue protein sequence, read N- to C-terminus: Opacity protein opA68 (238 aa).

A signal peptide is located at residue Ala1. The disordered stretch occupies residues Asn88–Gly109.

Belongs to the opacity porin family.

Its subcellular location is the cell outer membrane. Its function is as follows. Implicated in a number of adherence functions. OPA proteins are implicated in pathogenesis and are subject to phase variation. In Neisseria gonorrhoeae, this protein is Opacity protein opA68.